A 204-amino-acid polypeptide reads, in one-letter code: Small ribosomal subunit protein uS4 (204 aa).

Residues 22-43 (SGKELARRPYAPGDHGNTGRRP) are disordered. The 61-residue stretch at 94–154 (TRLDSVVFRL…ERSKKIVPIL (61 aa)) folds into the S4 RNA-binding domain.

It belongs to the universal ribosomal protein uS4 family. In terms of assembly, part of the 30S ribosomal subunit. Contacts protein S5. The interaction surface between S4 and S5 is involved in control of translational fidelity.

One of the primary rRNA binding proteins, it binds directly to 16S rRNA where it nucleates assembly of the body of the 30S subunit. In terms of biological role, with S5 and S12 plays an important role in translational accuracy. This chain is Small ribosomal subunit protein uS4, found in Oenococcus oeni (strain ATCC BAA-331 / PSU-1).